Here is a 265-residue protein sequence, read N- to C-terminus: Glutamate racemase (265 aa).

Substrate contacts are provided by residues 7 to 8 (DS) and 39 to 40 (YG). Cysteine 70 functions as the Proton donor/acceptor in the catalytic mechanism. 71–72 (NT) lines the substrate pocket. Catalysis depends on cysteine 179, which acts as the Proton donor/acceptor. 180–181 (TH) is a substrate binding site.

This sequence belongs to the aspartate/glutamate racemases family.

It carries out the reaction L-glutamate = D-glutamate. The protein operates within cell wall biogenesis; peptidoglycan biosynthesis. Its function is as follows. Provides the (R)-glutamate required for cell wall biosynthesis. The sequence is that of Glutamate racemase from Gloeobacter violaceus (strain ATCC 29082 / PCC 7421).